The sequence spans 629 residues: (-)-alpha pinene synthase 1, chloroplastic (629 aa).

The N-terminal 48 residues, 1–48, are a transit peptide targeting the chloroplast; sequence MSPVSVISLPSDLCLPTSFIDRSGRELNPLHITIPNVAMRRQGKLMTR. The Mg(2+) site is built by Asp-380, Asp-384, and Asp-532. The short motif at 380-384 is the DDXXD motif element; that stretch reads DDMYD.

It belongs to the terpene synthase family. Tpsd subfamily. It depends on Mg(2+) as a cofactor. The cofactor is Mn(2+).

Its subcellular location is the plastid. The protein resides in the chloroplast. It catalyses the reaction (2E)-geranyl diphosphate = (1S,5S)-alpha-pinene + diphosphate. It carries out the reaction (2E)-geranyl diphosphate = (1S,5S)-beta-pinene + diphosphate. Its pathway is terpene metabolism; oleoresin biosynthesis. The protein operates within secondary metabolite biosynthesis; terpenoid biosynthesis. Monoterpene synthase (TPS) involved in the biosynthesis of monoterpene natural products included in conifer oleoresin secretions and volatile emissions; these compounds contribute to biotic and abiotic stress defense against herbivores and pathogens. Catalyzes the conversion of (2E)-geranyl diphosphate (GPP) to (-)-alpha-pinene and, to a lower extent, to (-)-beta-pinene. The polypeptide is (-)-alpha pinene synthase 1, chloroplastic (Pinus contorta (Shore pine)).